Reading from the N-terminus, the 332-residue chain is Glycerol-3-phosphate dehydrogenase [NAD(P)+] (332 aa).

The NADPH site is built by tryptophan 13, lysine 34, and lysine 108. Lysine 108, glycine 136, and serine 138 together coordinate sn-glycerol 3-phosphate. NADPH is bound at residue alanine 140. Sn-glycerol 3-phosphate is bound by residues lysine 191, aspartate 244, serine 254, arginine 255, and asparagine 256. Catalysis depends on lysine 191, which acts as the Proton acceptor. Arginine 255 serves as a coordination point for NADPH. Residues valine 279 and glutamate 281 each coordinate NADPH.

This sequence belongs to the NAD-dependent glycerol-3-phosphate dehydrogenase family.

The protein localises to the cytoplasm. It catalyses the reaction sn-glycerol 3-phosphate + NAD(+) = dihydroxyacetone phosphate + NADH + H(+). The enzyme catalyses sn-glycerol 3-phosphate + NADP(+) = dihydroxyacetone phosphate + NADPH + H(+). Its pathway is membrane lipid metabolism; glycerophospholipid metabolism. Catalyzes the reduction of the glycolytic intermediate dihydroxyacetone phosphate (DHAP) to sn-glycerol 3-phosphate (G3P), the key precursor for phospholipid synthesis. This Francisella tularensis subsp. mediasiatica (strain FSC147) protein is Glycerol-3-phosphate dehydrogenase [NAD(P)+].